We begin with the raw amino-acid sequence, 352 residues long: Non-structural protein 2 (352 aa).

Belongs to the aquareoviridae NS2 protein family. As to quaternary structure, homomultimer.

Protein that binds to ssRNA and may be involved in genome packaging. The polypeptide is Non-structural protein 2 (S9) (Aquareovirus C (isolate Golden shiner/USA/GSRV/1977) (AQRV-C)).